The primary structure comprises 830 residues: BLOC-2 complex member HPS5 homolog (830 aa).

WD repeat units lie at residues 25–64, 67–106, and 114–153; these read RNNSRIKFTCFDCSPKYFVFGANSGSLYLYDRITTSFLAI, SQLGTIGKVSISHNEKQIAIGNQTGSIGILSTELAPSTDG, and GGPAFVTSFCWTEDDRELYCGDSRGIVSLIQFSLFMGRNI. The stretch at 578 to 604 forms a coiled coil; it reads DTETIVRLLRKLETLMEENEEPNARLK.

This sequence belongs to the HPS5 family.

Functionally, has a role in the biogenesis of eye pigment granules. Eye pigment granules are specialized forms of late endosomes or lysosomes. Biogenesis of pigment granules in the eye requires molecular components required for protein delivery to lysosomes. The sequence is that of BLOC-2 complex member HPS5 homolog from Anopheles gambiae (African malaria mosquito).